The primary structure comprises 517 residues: ATP synthase subunit alpha (517 aa).

ATP is bound at residue 173–180 (GDRQTGKT).

This sequence belongs to the ATPase alpha/beta chains family. In terms of assembly, F-type ATPases have 2 components, CF(1) - the catalytic core - and CF(0) - the membrane proton channel. CF(1) has five subunits: alpha(3), beta(3), gamma(1), delta(1), epsilon(1). CF(0) has three main subunits: a(1), b(2) and c(9-12). The alpha and beta chains form an alternating ring which encloses part of the gamma chain. CF(1) is attached to CF(0) by a central stalk formed by the gamma and epsilon chains, while a peripheral stalk is formed by the delta and b chains.

It is found in the cell inner membrane. The enzyme catalyses ATP + H2O + 4 H(+)(in) = ADP + phosphate + 5 H(+)(out). Produces ATP from ADP in the presence of a proton gradient across the membrane. The alpha chain is a regulatory subunit. The chain is ATP synthase subunit alpha from Legionella pneumophila (strain Lens).